Here is a 313-residue protein sequence, read N- to C-terminus: B3 domain-containing protein At2g31720 (313 aa).

A disordered region spans residues 80 to 110; that stretch reads KNQDPEQNPNRVASSPSSCHLESKRPQKVVS. The span at 84–99 shows a compositional bias: polar residues; the sequence is PEQNPNRVASSPSSCH. Residues 169-267 constitute a DNA-binding region (TF-B3); sequence WKQILDMDFL…MLFFAFVLSD (99 aa).

Its subcellular location is the nucleus. The protein is B3 domain-containing protein At2g31720 (ARF70) of Arabidopsis thaliana (Mouse-ear cress).